We begin with the raw amino-acid sequence, 472 residues long: Calcitonin gene-related peptide type 1 receptor (472 aa).

The signal sequence occupies residues 1–28 (MGLLLRSALFKYIIIVLIMLNLRGYVLA). At 29-149 (EQEQGSQIPL…FTHEKVKTAL (121 aa)) the chain is on the extracellular side. Cystine bridges form between Cys58/Cys84, Cys75/Cys115, and Cys98/Cys137. Residues Asn76, Asn128, and Asn133 are each glycosylated (N-linked (GlcNAc...) asparagine). Residues 150 to 174 (NLYYLTIIGHGLSIASLLISLGIFF) form a helical membrane-spanning segment. Residues 175 to 185 (YFKNLSCQRIT) are Cytoplasmic-facing. Residues 186–208 (LHKNLFFSFVCNSIITIISLSAV) traverse the membrane as a helical segment. Topologically, residues 209 to 219 (ANNQALVATNP) are extracellular. A helical transmembrane segment spans residues 220-248 (VSCKISQFIHLYLMGCNYFWMLCEGIYLH). Residues 249–262 (TLIVVAVFAEKQHL) are Cytoplasmic-facing. A helical membrane pass occupies residues 263 to 283 (MWYYLLGWGFPLIPACIHAVA). Residues 284–299 (RSLYYNDNCWISSETH) are Extracellular-facing. The chain crosses the membrane as a helical span at residues 300–324 (LLYIIHGPICAALLVNLFFLLNIVR). Topologically, residues 325-339 (VLITKLKVTHQAESN) are cytoplasmic. The helical transmembrane segment at 340-361 (LYMKAVRATLILVPLLGIEFVL) threads the bilayer. Topologically, residues 362 to 376 (FPWKPEGRIAEEIYD) are extracellular. Residues 377–397 (YVMHILMHYQGLLVATIFCFF) form a helical membrane-spanning segment. Residues 398–472 (NGEVQAVLKR…VFFKTEKQYM (75 aa)) are Cytoplasmic-facing.

The protein belongs to the G-protein coupled receptor 2 family.

It localises to the cell membrane. Functionally, may function as G protein-coupled receptor for calcitonin-gene-related peptides and adrenomedullin. Specificity may be modulated by accessory proteins. May activate cAMP-dependent pathway. The chain is Calcitonin gene-related peptide type 1 receptor (calcrl) from Xenopus tropicalis (Western clawed frog).